The following is a 319-amino-acid chain: Vomeronasal type-1 receptor 51 (319 aa).

The Extracellular segment spans residues 1 to 31; it reads MNEILFFSPQPLFSHMMNENSRVHTHSNLRH. A helical membrane pass occupies residues 32-52; that stretch reads IFFSEIGIGISGNSFLLLFHI. The Cytoplasmic portion of the chain corresponds to 53–65; sequence LKFIHGHRSRLSD. The chain crosses the membrane as a helical span at residues 66 to 86; sequence LPIGLLSLIHLLMLLVMAFIA. Residues 87–109 are Extracellular-facing; that stretch reads TDIFISWRGWDDIICKFLVYLYR. Cysteine 101 and cysteine 188 are joined by a disulfide. A helical transmembrane segment spans residues 110–130; the sequence is VLRGLSLCTTSMLSVLQAIIL. The Cytoplasmic segment spans residues 131-150; sequence SPRSSCLAKFKRKSLHHISC. Residues 151 to 171 traverse the membrane as a helical segment; that stretch reads AILFLSVLYMLIGSQLLVSII. Over 172–203 the chain is Extracellular; sequence ATPNLTTNDFIYVTQSCSILPLSYVMQSMFST. Asparagine 175 carries N-linked (GlcNAc...) asparagine glycosylation. Residues 204–224 traverse the membrane as a helical segment; the sequence is LLVIRDVFLISLMVLSTWYMV. The Cytoplasmic segment spans residues 225–254; it reads ALLCRHRKKTQHLQGISLSPKTSPKQRATQ. Residues 255-275 form a helical membrane-spanning segment; it reads TLLMLMSFFVLMTIYDTIVSC. The Extracellular segment spans residues 276-285; sequence SRTMFLNDPT. A helical membrane pass occupies residues 286–306; sequence SYNMQIFVVHIYATVSPFVFM. Residues 307 to 319 are Cytoplasmic-facing; it reads STEKHIVNCLRSV.

This sequence belongs to the G-protein coupled receptor 1 family. Expressed in a subset of sensory neurons located in the apical layer of the vomeronasal organ.

It is found in the cell membrane. Putative pheromone receptor implicated in the regulation of social as well as reproductive behavior. In Mus musculus (Mouse), this protein is Vomeronasal type-1 receptor 51 (Vmn1r51).